The sequence spans 473 residues: Cysteine--tRNA ligase (473 aa).

Residue Cys-30 coordinates Zn(2+). A 'HIGH' region motif is present at residues 32 to 42; the sequence is MTVYDYCHIGH. Residues Cys-213, His-238, and Glu-242 each coordinate Zn(2+). The short motif at 270 to 274 is the 'KMSKS' region element; sequence KMSKS. Lys-273 contributes to the ATP binding site.

Belongs to the class-I aminoacyl-tRNA synthetase family. As to quaternary structure, monomer. The cofactor is Zn(2+).

It is found in the cytoplasm. It carries out the reaction tRNA(Cys) + L-cysteine + ATP = L-cysteinyl-tRNA(Cys) + AMP + diphosphate. This Acinetobacter baumannii (strain ACICU) protein is Cysteine--tRNA ligase.